Reading from the N-terminus, the 227-residue chain is NAD(P)H-hydrate epimerase (227 aa).

Residues 10–227 (MRALETAAFN…GKIMVQYIGL (218 aa)) form the YjeF N-terminal domain. 62–66 (NNGGD) contacts (6S)-NADPHX. 2 residues coordinate K(+): asparagine 63 and aspartate 142. Residues 146-152 (GIGLNRP) and aspartate 176 contribute to the (6S)-NADPHX site. Position 179 (serine 179) interacts with K(+).

It belongs to the NnrE/AIBP family. The cofactor is K(+).

It catalyses the reaction (6R)-NADHX = (6S)-NADHX. It carries out the reaction (6R)-NADPHX = (6S)-NADPHX. In terms of biological role, catalyzes the epimerization of the S- and R-forms of NAD(P)HX, a damaged form of NAD(P)H that is a result of enzymatic or heat-dependent hydration. This is a prerequisite for the S-specific NAD(P)H-hydrate dehydratase to allow the repair of both epimers of NAD(P)HX. In Roseobacter litoralis (strain ATCC 49566 / DSM 6996 / JCM 21268 / NBRC 15278 / OCh 149), this protein is NAD(P)H-hydrate epimerase.